Consider the following 161-residue polypeptide: Transcriptional regulator MraZ (161 aa).

2 SpoVT-AbrB domains span residues 7–55 and 84–127; these read RYTN…GPAF and SAEL…EPGA.

Belongs to the MraZ family. Forms oligomers.

Its subcellular location is the cytoplasm. The protein resides in the nucleoid. The sequence is that of Transcriptional regulator MraZ from Parvibaculum lavamentivorans (strain DS-1 / DSM 13023 / NCIMB 13966).